Consider the following 270-residue polypeptide: tRNA pseudouridine synthase A (270 aa).

Asp-60 (nucleophile) is an active-site residue. Residues 107 to 111 form an RNA binding region; that stretch reads FHARF. Tyr-118 contributes to the substrate binding site. The interaction with tRNA stretch occupies residues 168–172; that stretch reads QCQSR.

It belongs to the tRNA pseudouridine synthase TruA family. Homodimer.

The catalysed reaction is uridine(38/39/40) in tRNA = pseudouridine(38/39/40) in tRNA. In terms of biological role, formation of pseudouridine at positions 38, 39 and 40 in the anticodon stem and loop of transfer RNAs. The sequence is that of tRNA pseudouridine synthase A from Escherichia coli (strain 55989 / EAEC).